Consider the following 78-residue polypeptide: MKTIVYLIVSILLLSSTVLVLAEGNAASHELQEYPIEEQRKCVDGSCDPYSSDAPPCCDNQICQCIFFVPCYCKYRGK.

A signal peptide spans 1-22; it reads MKTIVYLIVSILLLSSTVLVLA. Positions 23-40 are excised as a propeptide; the sequence is EGNAASHELQEYPIEEQR. Cystine bridges form between Cys42/Cys58, Cys47/Cys63, Cys57/Cys73, and Cys65/Cys71. Arg76 is modified (arginine amide).

As to expression, expressed by the venom gland.

It is found in the secreted. Its function is as follows. Agonist of rat Nav1.3/SCN3A. This toxin increases the peak current amplitude, and potently inhibits the fast inactivation of the channel (EC(50)=120 nM). The inhibition of fast inactivation is voltage-independent (depolarizing voltages ranging from 220 mV to 130 mV). The toxin might bind to the domain IV of the Nav1.3 channel, while domain II might not participate in interacting with the toxin but could determine the efficacy of RTX-VII. In vivo, when intracerebroventricularly injected into mice, the toxin causes involuntary body twitching (seizure-like symptoms). In Macrothele raveni (Funnel-web spider), this protein is RTX-VII.